Consider the following 378-residue polypeptide: Homeobox protein Meis3 (378 aa).

Residues 24-57 form a disordered region; sequence FSEAAPSVPRAPGPYTPHRPPQLQAPGLDSDSLK. The span at 32-43 shows a compositional bias: pro residues; that stretch reads PRAPGPYTPHRP. One can recognise an MEIS N-terminal domain in the interval 99–182; the sequence is GGDVCSSDSF…PIDLVIEDRD (84 aa). Residues 203–265 form a disordered region; that stretch reads NTTWIRDHED…DEDLDLERRR (63 aa). A compositionally biased stretch (low complexity) spans 230–244; that stretch reads SQSGDNSSDQGDGLD. Positions 265–327 form a DNA-binding region, homeobox; TALE-type; sequence RNKKRGIFPK…NARRRIVQPM (63 aa).

This sequence belongs to the TALE/MEIS homeobox family. Expressed at high levels in the brain. Significant expression also observed in the heart, spleen and lung. Expressed in pancreatic islets (beta-cells and non-beta-cells).

It localises to the nucleus. Its function is as follows. Transcriptional regulator which directly modulates PDPK1 expression, thus promoting survival of pancreatic beta-cells. Also regulates expression of NDFIP1, BNIP3, and CCNG1. The protein is Homeobox protein Meis3 (Meis3) of Mus musculus (Mouse).